The chain runs to 296 residues: Phosphoribosylaminoimidazole-succinocarboxamide synthase (296 aa).

It belongs to the SAICAR synthetase family.

The catalysed reaction is 5-amino-1-(5-phospho-D-ribosyl)imidazole-4-carboxylate + L-aspartate + ATP = (2S)-2-[5-amino-1-(5-phospho-beta-D-ribosyl)imidazole-4-carboxamido]succinate + ADP + phosphate + 2 H(+). Its pathway is purine metabolism; IMP biosynthesis via de novo pathway; 5-amino-1-(5-phospho-D-ribosyl)imidazole-4-carboxamide from 5-amino-1-(5-phospho-D-ribosyl)imidazole-4-carboxylate: step 1/2. The sequence is that of Phosphoribosylaminoimidazole-succinocarboxamide synthase from Citrifermentans bemidjiense (strain ATCC BAA-1014 / DSM 16622 / JCM 12645 / Bem) (Geobacter bemidjiensis).